Consider the following 278-residue polypeptide: Membrane protein insertase YidC 2 (278 aa).

The N-terminal stretch at 1–18 (MHKRLFITLLGFIILLAG) is a signal peptide. Cysteine 19 is lipidated: N-palmitoyl cysteine. Cysteine 19 is lipidated: S-diacylglycerol cysteine. A run of 4 helical transmembrane segments spans residues 55-75 (GFAIISIVLIVRFILLPFMLI), 132-152 (MLGCLPVLIQMPILMGLYMSL), 176-196 (LIMTIIAAIMYFVQPLVNSIH), and 224-244 (AAALGLYWSISAAFLIVQMHF).

The protein belongs to the OXA1/ALB3/YidC family. Type 2 subfamily.

The protein resides in the cell membrane. Functionally, required for the insertion and/or proper folding and/or complex formation of integral membrane proteins into the membrane. Involved in integration of membrane proteins that insert both dependently and independently of the Sec translocase complex, as well as at least some lipoproteins. The sequence is that of Membrane protein insertase YidC 2 from Staphylococcus epidermidis (strain ATCC 12228 / FDA PCI 1200).